The sequence spans 166 residues: SsrA-binding protein (166 aa).

Residues 146 to 166 (KRAAEKEKQSKKDVKAAMERY) are disordered.

This sequence belongs to the SmpB family.

Its subcellular location is the cytoplasm. Its function is as follows. Required for rescue of stalled ribosomes mediated by trans-translation. Binds to transfer-messenger RNA (tmRNA), required for stable association of tmRNA with ribosomes. tmRNA and SmpB together mimic tRNA shape, replacing the anticodon stem-loop with SmpB. tmRNA is encoded by the ssrA gene; the 2 termini fold to resemble tRNA(Ala) and it encodes a 'tag peptide', a short internal open reading frame. During trans-translation Ala-aminoacylated tmRNA acts like a tRNA, entering the A-site of stalled ribosomes, displacing the stalled mRNA. The ribosome then switches to translate the ORF on the tmRNA; the nascent peptide is terminated with the 'tag peptide' encoded by the tmRNA and targeted for degradation. The ribosome is freed to recommence translation, which seems to be the essential function of trans-translation. This Synechococcus sp. (strain CC9605) protein is SsrA-binding protein.